The sequence spans 304 residues: tRNA dimethylallyltransferase (304 aa).

10-17 is an ATP binding site; sequence GPTASGKS. Substrate is bound at residue 12–17; that stretch reads TASGKS. An interaction with substrate tRNA region spans residues 35-38; that stretch reads DSRQ.

This sequence belongs to the IPP transferase family. As to quaternary structure, monomer. Requires Mg(2+) as cofactor.

The catalysed reaction is adenosine(37) in tRNA + dimethylallyl diphosphate = N(6)-dimethylallyladenosine(37) in tRNA + diphosphate. Catalyzes the transfer of a dimethylallyl group onto the adenine at position 37 in tRNAs that read codons beginning with uridine, leading to the formation of N6-(dimethylallyl)adenosine (i(6)A). This chain is tRNA dimethylallyltransferase, found in Gloeothece citriformis (strain PCC 7424) (Cyanothece sp. (strain PCC 7424)).